The chain runs to 456 residues: MNLWTKIFQPPRHIKEISDPELVKKQYKYWRVRIFYSMFFGYVFFYFTRKSFTFAMPTLIADLGFDKAQLGIIGSTLYITYGISKFVSGVMSDQSNPRYFMATGLIITGLSNIFFGLSSTVPLFVLFWGINGWFQGWGWPPCARLLTHWYSKSERGTWWSVWSTSHNIGGALIPVLTGIAIDYAGWRGAMFIPGIICIIMGFILIDRLRDTPQSLGLPAIEKFKKEDLSHPHEETTADILEEEAERELSTKEILFTYVLSNKWLWFLSFASFFIYVVRMAVNDWSALYLIETKNYSTVKANLCVSLFEIGGLFGMLLAGWLSDTISKGKRGPMNVVFSLGLLFSILGLWGTHDRSIWWADGAFLFIIGFFLFGPQMMIGLAAAELSHKKAAGTASGFTGWFAYFGAAFAGYPLGKVAQDWGWHGFFVALLACALIALLFFLPTWNASEQSLRKHSH.

11 helical membrane passes run 34–54, 70–90, 113–133, 161–181, 185–205, 257–277, 302–322, 331–351, 362–382, 394–414, and 421–441; these read IFYSMFFGYVFFYFTRKSFTF, LGIIGSTLYITYGISKFVSGV, IFFGLSSTVPLFVLFWGINGW, VWSTSHNIGGALIPVLTGIAI, GWRGAMFIPGIICIIMGFILI, YVLSNKWLWFLSFASFFIYVV, LCVSLFEIGGLFGMLLAGWLS, GPMNVVFSLGLLFSILGLWGT, AFLFIIGFFLFGPQMMIGLAA, ASGFTGWFAYFGAAFAGYPLG, and GWHGFFVALLACALIALLFFL.

It belongs to the major facilitator superfamily. Organophosphate:Pi antiporter (OPA) (TC 2.A.1.4) family.

The protein resides in the cell membrane. Its function is as follows. Transport protein for sugar phosphate uptake. This chain is Probable hexose phosphate transport protein, found in Chlamydia muridarum (strain MoPn / Nigg).